Reading from the N-terminus, the 492-residue chain is UDP-N-acetylmuramoyl-L-alanyl-D-glutamate--2,6-diaminopimelate ligase (492 aa).

S21 is a binding site for UDP-N-acetyl-alpha-D-muramoyl-L-alanyl-D-glutamate. 98–104 provides a ligand contact to ATP; that stretch reads GTNGKSS. UDP-N-acetyl-alpha-D-muramoyl-L-alanyl-D-glutamate is bound by residues 144-145, S171, Q177, and R179; that span reads TT. At K211 the chain carries N6-carboxylysine. Meso-2,6-diaminopimelate is bound by residues R372, 396–399, G446, and E450; that span reads DNPR. Positions 396–399 match the Meso-diaminopimelate recognition motif motif; the sequence is DNPR.

It belongs to the MurCDEF family. MurE subfamily. It depends on Mg(2+) as a cofactor. In terms of processing, carboxylation is probably crucial for Mg(2+) binding and, consequently, for the gamma-phosphate positioning of ATP.

The protein localises to the cytoplasm. The enzyme catalyses UDP-N-acetyl-alpha-D-muramoyl-L-alanyl-D-glutamate + meso-2,6-diaminopimelate + ATP = UDP-N-acetyl-alpha-D-muramoyl-L-alanyl-gamma-D-glutamyl-meso-2,6-diaminopimelate + ADP + phosphate + H(+). The protein operates within cell wall biogenesis; peptidoglycan biosynthesis. Catalyzes the addition of meso-diaminopimelic acid to the nucleotide precursor UDP-N-acetylmuramoyl-L-alanyl-D-glutamate (UMAG) in the biosynthesis of bacterial cell-wall peptidoglycan. The chain is UDP-N-acetylmuramoyl-L-alanyl-D-glutamate--2,6-diaminopimelate ligase from Rickettsia typhi (strain ATCC VR-144 / Wilmington).